Consider the following 59-residue polypeptide: Potassium channel toxin alpha-KTx 4.1 (59 aa).

The signal sequence occupies residues 1 to 22 (MKAFYGILIIFILISMIDLSKQ). Cystine bridges form between cysteine 29–cysteine 50, cysteine 35–cysteine 55, and cysteine 39–cysteine 57. The segment at 48 to 55 (GKCMNGKC) is interaction with Ca(2+)-activated K(+) channels.

Belongs to the short scorpion toxin superfamily. Potassium channel inhibitor family. Alpha-KTx 04 subfamily. Expressed by the venom gland.

The protein resides in the secreted. In terms of biological role, potently blocks Kv1.1/KCNA1 (85%), Kv1.2/KCNA2 (91%), Kv1.3/KCNA3 (89%), Kv1.6/KCNA6 (94%), and Shaker (97%). This is Potassium channel toxin alpha-KTx 4.1 from Tityus serrulatus (Brazilian scorpion).